Here is an 83-residue protein sequence, read N- to C-terminus: MKTLLLTLLVVTIVCLDLGYTLECHNQQSSQTPTTTGCSGGETNCYKKRWRDHRGYRTERGCGCPSVKNGIEINCCTTDRCNN.

Residues 1–21 form the signal peptide; sequence MKTLLLTLLVVTIVCLDLGYT. 4 cysteine pairs are disulfide-bonded: C24/C45, C38/C62, C64/C75, and C76/C81.

Belongs to the three-finger toxin family. Short-chain subfamily. Type I alpha-neurotoxin sub-subfamily. As to expression, expressed by the venom gland.

The protein resides in the secreted. Binds to muscle nicotinic acetylcholine receptor (nAChR) and inhibit acetylcholine from binding to the receptor, thereby impairing neuromuscular transmission. Has a higher toxicity than cobrotoxin-b. In vivo, when tested on rat arthritis models, shows anti-inflammation and immunosuppression effects. The chain is Cobrotoxin from Naja atra (Chinese cobra).